The sequence spans 452 residues: 1,3-beta-glucanosyltransferase gel1 (452 aa).

The N-terminal stretch at 1–19 is a signal peptide; the sequence is MKASAVTAALAVGASTVLA. Cys71 and Cys100 are oxidised to a cystine. Positions 89, 159, 160, 201, and 206 each coordinate (1,3-beta-D-glucosyl)n. The Proton donor role is filled by Glu160. 2 disulfide bridges follow: Cys215–Cys345 and Cys233–Cys264. Asn249 is a glycosylation site (N-linked (GlcNAc...) asparagine). The active-site Nucleophile is Glu261. Tyr292 contributes to the (1,3-beta-D-glucosyl)n binding site. A compositionally biased stretch (polar residues) spans 325–340; that stretch reads EKTSNPSGDGNYNKTG. The disordered stretch occupies residues 325-419; the sequence is EKTSNPSGDG…SGTSTSSKGA (95 aa). Asn337 carries N-linked (GlcNAc...) asparagine glycosylation. The span at 393 to 419 shows a compositional bias: low complexity; sequence STATAEPGSGSATGSSSSGTSTSSKGA. A lipid anchor (GPI-like-anchor amidated alanine) is attached at Ala419. The propeptide at 420-452 is removed in mature form; that stretch reads AAGLTVPSLTMAPVVVGAVTLLSTVFGAGLVLL.

This sequence belongs to the glycosyl hydrolase 72 family. In terms of processing, the GPI-like anchor contains a phosphoceramide lipid group.

Its subcellular location is the cell membrane. Splits internally a 1,3-beta-glucan molecule and transfers the newly generated reducing end (the donor) to the non-reducing end of another 1,3-beta-glucan molecule (the acceptor) forming a 1,3-beta linkage, resulting in the elongation of 1,3-beta-glucan chains in the cell wall. Involved in cell wall morphogenesis. This is 1,3-beta-glucanosyltransferase gel1 (gel1) from Aspergillus fumigatus (strain ATCC MYA-4609 / CBS 101355 / FGSC A1100 / Af293) (Neosartorya fumigata).